Reading from the N-terminus, the 478-residue chain is Calcium/calmodulin-dependent protein kinase type II subunit alpha (478 aa).

Phosphotyrosine is present on tyrosine 13. In terms of domain architecture, Protein kinase spans 13 to 271 (YQLFEELGKG…AAEALKHPWI (259 aa)). Residues 19–27 (LGKGAFSVV) and lysine 42 contribute to the ATP site. Catalysis depends on aspartate 135, which acts as the Proton acceptor. A Phosphoserine modification is found at serine 257. Threonine 286 is modified (phosphothreonine; by autocatalysis). The interval 290 to 300 (LKKFNARRKLK) is calmodulin-binding. The tract at residues 310–320 (TRNFSGGKSGG) is interaction with BAALC. Residues 314 to 341 (SGGKSGGNKKSDGVKESSESTNTTIEDE) are disordered. Over residues 322–331 (KKSDGVKESS) the composition is skewed to basic and acidic residues. Residues serine 330, serine 331, and serine 333 each carry the phosphoserine modification. Residues threonine 336 and threonine 337 each carry the phosphothreonine modification. Serine 404 bears the Phosphoserine mark.

Belongs to the protein kinase superfamily. CAMK Ser/Thr protein kinase family. CaMK subfamily. There are 4 genes encoding calcium/calmodulin-dependent protein kinase type II chains: CAMK2A, CAMK2B, CAMK2G and CAMK2D. The corresponding proteins assemble into homo- or heteromultimeric holoenzymes composed of 12 subunits with two hexameric rings stacked one on top of the other. Interacts with BAALC. Interacts with MPDZ. Interacts with SYN1. Interacts with CAMK2N2. Interacts with SYNGAP1. Interacts with SYNPO2. Interacts with SHANK3. Interacts with GRIN2B. Interacts with CACNB2. Interacts with LRRC7. Interacts with GRM5. Interacts with DAGLA (via C-terminal); this interaction is enhanced by autophosphorylation of CAMK2A at Thr-286. Interacts with CAMK2N1; this interaction requires CAMK2A activation by Ca(2+). It depends on Mg(2+) as a cofactor. Autophosphorylation of Thr-286 following activation by Ca(2+)/calmodulin. Phosphorylation of Thr-286 locks the kinase into an activated state. In terms of processing, palmitoylated. Probably palmitoylated by ZDHHC3 and ZDHHC7.

The protein resides in the synapse. It localises to the postsynaptic density. It is found in the cell projection. Its subcellular location is the dendritic spine. The protein localises to the dendrite. It catalyses the reaction L-seryl-[protein] + ATP = O-phospho-L-seryl-[protein] + ADP + H(+). The catalysed reaction is L-threonyl-[protein] + ATP = O-phospho-L-threonyl-[protein] + ADP + H(+). Its activity is regulated as follows. Activated by Ca(2+)/calmodulin. Binding of calmodulin results in conformational change that relieves intrasteric autoinhibition and allows autophosphorylation of Thr-286 which turns the kinase in a constitutively active form and confers to the kinase a Ca(2+)-independent activity. Its function is as follows. Calcium/calmodulin-dependent protein kinase that functions autonomously after Ca(2+)/calmodulin-binding and autophosphorylation, and is involved in various processes, such as synaptic plasticity, neurotransmitter release and long-term potentiation. Member of the NMDAR signaling complex in excitatory synapses, it regulates NMDAR-dependent potentiation of the AMPAR and therefore excitatory synaptic transmission. Regulates dendritic spine development. Also regulates the migration of developing neurons. Phosphorylates the transcription factor FOXO3 to activate its transcriptional activity. Phosphorylates the transcription factor ETS1 in response to calcium signaling, thereby decreasing ETS1 affinity for DNA. In response to interferon-gamma (IFN-gamma) stimulation, catalyzes phosphorylation of STAT1, stimulating the JAK-STAT signaling pathway. In response to interferon-beta (IFN-beta) stimulation, stimulates the JAK-STAT signaling pathway. Acts as a negative regulator of 2-arachidonoylglycerol (2-AG)-mediated synaptic signaling via modulation of DAGLA activity. The sequence is that of Calcium/calmodulin-dependent protein kinase type II subunit alpha (CAMK2A) from Pongo abelii (Sumatran orangutan).